Consider the following 290-residue polypeptide: MNVSKIAVFGLGVMGSPMAQNLVKNGYQTVGYNRTLERPSVQEAAKAGVKVVTSIAVAAANADIILTCVGDEKDVQQLILGSGGIAEYAKPQALIIDCSTIGKTAAYELATNLKLQGLRFLDAPVTGGDVGAINGTLTIMVGGDISDFEEALPVLKSIGEKIVHCGPSGSGQAVKLCNQVLCGIHAIAAAEAIQLSEQLGIAPELVIDTCGSGAAGSWALTNLAPKMSEADFAPGFMVKHLLKDLRLVREAAENGPLPGVTLAESLFTSVQLLGGEDQGSQAIIRAYREA.

NAD(+) contacts are provided by residues 7–21 and T100; that span reads AVFG…MAQN. K175 is a catalytic residue. K243 is an NAD(+) binding site.

Belongs to the HIBADH-related family.

This is an uncharacterized protein from Synechocystis sp. (strain ATCC 27184 / PCC 6803 / Kazusa).